Here is a 270-residue protein sequence, read N- to C-terminus: MDYYFTKGKPQLVNMKTPVYLVTQFQQLMDLMQNQYQVSCLELMQRSGKAACDFLVYRWPKVKKISIFCGRGDNGGQGYVLAQQAKKMGMIPTVWQVGHQMSMSKPPQMHEEVWYEMNSCHQQGILLHTYSPDIDLGDPELIVDALFGVGLYGHVRPEIASLLQRLQQFTVPILAIEVPTGINASTGEIAGNALAATATITFLCMKLGLLINDGKIYSGEIAFDDLLAPEAIYQQVKGIEKSSLLDSSTCFSKKIWYRNKTQKGWQLSIN.

The region spanning 25–234 (FQQLMDLMQN…DLLAPEAIYQ (210 aa)) is the YjeF N-terminal domain. 73–77 (DNGGQ) contributes to the (6S)-NADPHX binding site. Asparagine 74 and aspartate 144 together coordinate K(+). (6S)-NADPHX is bound by residues 148–154 (GVGLYGH) and glutamate 177. K(+) is bound at residue threonine 180.

The protein belongs to the NnrE/AIBP family. Requires K(+) as cofactor.

It catalyses the reaction (6R)-NADHX = (6S)-NADHX. The catalysed reaction is (6R)-NADPHX = (6S)-NADPHX. Catalyzes the epimerization of the S- and R-forms of NAD(P)HX, a damaged form of NAD(P)H that is a result of enzymatic or heat-dependent hydration. This is a prerequisite for the S-specific NAD(P)H-hydrate dehydratase to allow the repair of both epimers of NAD(P)HX. This chain is NAD(P)H-hydrate epimerase, found in Legionella pneumophila subsp. pneumophila (strain Philadelphia 1 / ATCC 33152 / DSM 7513).